Reading from the N-terminus, the 183-residue chain is Protein FAM180B (183 aa).

The signal sequence occupies residues 1-23 (MAATLQFLVCLVVAICLLSGVTT).

It belongs to the FAM180 family.

It is found in the secreted. This chain is Protein FAM180B (FAM180B), found in Homo sapiens (Human).